We begin with the raw amino-acid sequence, 1102 residues long: MPVMKGLLAPQNTFLDTIATRFDGTHSNFILANAQVAKGFPIVYCSDGFCELAGFARTEVMQKSCSCKFLFGVETNEQLMLQIEKSLEEKVEFKGEIMFYKKNGAPFWCLLDIVPIKNEKGDVVLFLASFKDITDTKVKITSEDKKEDRTKGRSRAGSHFDSARRRSRAVLYHISGHLQRREKNKLKINNNVFVDKPAFPEYKASDAKKSKFILLHFSTFKAGWDWLILLATFYVAVTVPYNVCFIGNEDLSTTRSTTVSDIAVEILFIIDIILNFRTTYVSKSGQVIFEARSICIHYVTTWFIIDLIAALPFDLLYAFNVTVVSLVHLLKTVRLLRLLRLLQKLDRYSQHSTIVLTLLMSMFALLAHWMACIWYVIGKMEREDNSLLKWEVGWLHELGKRLESPYYGNNTLGGPSIRSAYIAALYFTLSSLTSVGFGNVSANTDAEKIFSICTMLIGALMHALVFGNVTAIIQRMYSRWSLYHTRTKDLKDFIRVHHLPQQLKQRMLEYFQTTWSVNNGIDSNELLKDFPDELRSDITMHLNKEILQLSLFECASRGCLRSLSLHIKTSFCAPGEYLLRQGDALQAIYFVCSGSMEVLKDSMVLAILGKGDLIGANLSIKDQVIKTNADVKALTYCDLQCIILKGLFEVLGLYPEYAHKFVEDIQHDLTYNLREGHESDVISRLSNKSTVSQAEPKGNGSINKRLPSIVEDEEEEEVEEEETTSLSPIYTRGSSVSHSKKTGSNKTYLGLSLKQLASGTVPFHSPIRVSSANSPKTKQEADPPNHGRKKEKNLKVQLSSLGSAGTPELSPRIVDGIEDGNSNEETQTFDFGSEQIRPEPRISPPLAESEIGAAFLFIKAEETKQQINKLNSEVTTLTQEVSQLGRDMRSIMQLLENILSPQQPSQFCSLHPTPMCPSRESLQTRVSWSAHQPCLHLQAGGAHLYHGNVASGIWSVDPSLVGSSPQRTEAHEQNPADSELHHSPNLDYSPSHCQVIQEGHLQFLRCISPHSDTTLTPLQSISATLSSSVCSSSETSLHLVLPSRSEEGSITHGPVSSFSLENLPGSWDREQMMSASSERLENFPVEVVTSTADVKDSKAINV.

Over 1 to 225 the chain is Cytoplasmic; it reads MPVMKGLLAP…HFSTFKAGWD (225 aa). A PAS domain is found at 18-90; it reads IATRFDGTHS…LQIEKSLEEK (73 aa). Positions 93–145 constitute a PAC domain; sequence FKGEIMFYKKNGAPFWCLLDIVPIKNEKGDVVLFLASFKDITDTKVKITSEDK. Basic and acidic residues predominate over residues 142–151; it reads SEDKKEDRTK. The disordered stretch occupies residues 142–162; sequence SEDKKEDRTKGRSRAGSHFDS. A helical membrane pass occupies residues 226–246; sequence WLILLATFYVAVTVPYNVCFI. Topologically, residues 247 to 255 are extracellular; it reads GNEDLSTTR. A helical transmembrane segment spans residues 256-276; it reads STTVSDIAVEILFIIDIILNF. Over 277 to 298 the chain is Cytoplasmic; it reads RTTYVSKSGQVIFEARSICIHY. Residues 299 to 319 traverse the membrane as a helical segment; it reads VTTWFIIDLIAALPFDLLYAF. A glycan (N-linked (GlcNAc...) asparagine) is linked at asparagine 320. Over 320–327 the chain is Extracellular; sequence NVTVVSLV. The helical; Voltage-sensor transmembrane segment at 328–348 threads the bilayer; the sequence is HLLKTVRLLRLLRLLQKLDRY. Over 349–357 the chain is Cytoplasmic; that stretch reads SQHSTIVLT. A helical membrane pass occupies residues 358–378; it reads LLMSMFALLAHWMACIWYVIG. Residues 379-419 are Extracellular-facing; sequence KMEREDNSLLKWEVGWLHELGKRLESPYYGNNTLGGPSIRS. N-linked (GlcNAc...) asparagine glycosylation occurs at asparagine 409. The segment at residues 420–440 is an intramembrane region (pore-forming); it reads AYIAALYFTLSSLTSVGFGNV. A Selectivity filter motif is present at residues 434 to 439; that stretch reads SVGFGN. Topologically, residues 441–448 are extracellular; that stretch reads SANTDAEK. A helical membrane pass occupies residues 449 to 469; that stretch reads IFSICTMLIGALMHALVFGNV. At 470–1102 the chain is on the cytoplasmic side; sequence TAIIQRMYSR…DVKDSKAINV (633 aa). The segment at 551–668 is cNMP-binding domain; that stretch reads LFECASRGCL…HKFVEDIQHD (118 aa). Positions 684 to 693 are enriched in polar residues; that stretch reads RLSNKSTVSQ. Disordered regions lie at residues 684–743, 764–841, and 960–991; these read RLSN…KKTG, HSPI…PEPR, and LVGSSPQRTEAHEQNPADSELHHSPNLDYSPS. Over residues 710–723 the composition is skewed to acidic residues; that stretch reads VEDEEEEEVEEEET. Positions 724–737 are enriched in polar residues; sequence TSLSPIYTRGSSVS. Basic and acidic residues predominate over residues 968–984; that stretch reads TEAHEQNPADSELHHSP.

It belongs to the potassium channel family. H (Eag) (TC 1.A.1.20) subfamily. Kv12.1/KCNH8 sub-subfamily. The potassium channel is probably composed of a homo- or heterotetrameric complex of pore-forming alpha subunits that can associate with modulating beta subunits.

It localises to the membrane. It catalyses the reaction K(+)(in) = K(+)(out). In terms of biological role, pore-forming (alpha) subunit of a voltage-gated delayed rectifier potassium channel that mediates outward-rectifying potassium currents. Elicits a slowly activating, non-inactivating and slowly deactivation outwards potassium current at depolarizating voltages from -30 mV to +50mV. Shows no obvious change in the activation rate from different holding potentials. Activation is strongly dependent on the pH of the external solution. The chain is Voltage-gated delayed rectifier potassium channel KCNH8 from Mus musculus (Mouse).